We begin with the raw amino-acid sequence, 386 residues long: Ribosomal RNA small subunit methyltransferase H (386 aa).

S-adenosyl-L-methionine-binding positions include 97–99 (GGH), D116, Y143, D167, and Q174.

The protein belongs to the methyltransferase superfamily. RsmH family.

The protein localises to the cytoplasm. The catalysed reaction is cytidine(1402) in 16S rRNA + S-adenosyl-L-methionine = N(4)-methylcytidine(1402) in 16S rRNA + S-adenosyl-L-homocysteine + H(+). Its function is as follows. Specifically methylates the N4 position of cytidine in position 1402 (C1402) of 16S rRNA. The protein is Ribosomal RNA small subunit methyltransferase H of Mycobacterium avium (strain 104).